Consider the following 565-residue polypeptide: Sulfite reductase [NADPH] hemoprotein beta-component (565 aa).

[4Fe-4S] cluster contacts are provided by Cys-429, Cys-435, Cys-474, and Cys-478. Cys-478 lines the siroheme pocket.

It belongs to the nitrite and sulfite reductase 4Fe-4S domain family. Alpha(8)-beta(8). The alpha component is a flavoprotein, the beta component is a hemoprotein. It depends on siroheme as a cofactor. Requires [4Fe-4S] cluster as cofactor.

It catalyses the reaction hydrogen sulfide + 3 NADP(+) + 3 H2O = sulfite + 3 NADPH + 4 H(+). Its pathway is sulfur metabolism; hydrogen sulfide biosynthesis; hydrogen sulfide from sulfite (NADPH route): step 1/1. Its function is as follows. Component of the sulfite reductase complex that catalyzes the 6-electron reduction of sulfite to sulfide. This is one of several activities required for the biosynthesis of L-cysteine from sulfate. The protein is Sulfite reductase [NADPH] hemoprotein beta-component of Shewanella sp. (strain MR-4).